The following is a 542-amino-acid chain: Hydroxylamine reductase (542 aa).

[4Fe-4S] cluster contacts are provided by Cys3, Cys6, Cys15, and Cys21. The hybrid [4Fe-2O-2S] cluster site is built by His238, Glu262, Cys307, Cys398, Cys426, Cys451, Glu485, and Lys487. Cys398 is subject to Cysteine persulfide.

Belongs to the HCP family. [4Fe-4S] cluster serves as cofactor. It depends on hybrid [4Fe-2O-2S] cluster as a cofactor.

Its subcellular location is the cytoplasm. It catalyses the reaction A + NH4(+) + H2O = hydroxylamine + AH2 + H(+). In terms of biological role, catalyzes the reduction of hydroxylamine to form NH(3) and H(2)O. The protein is Hydroxylamine reductase of Microcystis aeruginosa (strain NIES-843 / IAM M-2473).